The following is a 31-amino-acid chain: U14-ctenitoxin-Co1a (31 aa).

Disulfide bonds are present. In terms of tissue distribution, expressed by the venom gland.

The protein resides in the secreted. Functionally, omega-agatoxins are antagonists of voltage-gated calcium channels (Cav). The sequence is that of U14-ctenitoxin-Co1a from Ctenus ornatus (Brazilian spider).